The chain runs to 448 residues: MTPIQKFNRQLAAAKLLSPQQTVVVAVSTGVDSMVLLHLLQRLPAAERPRVVVAHVNHHLREQSQMEADYLRQYCQQQNLKLVMADWLPAAHPKSGIEAAGRQFRYHVFAKVMRENRATAVLTAHHANDQVETYLMKLARGGDISQLTGIATSRPFATGRLIRPLLTWSKDQLRNYAAEQHVVYFEDVTNQDVALTRNRIRHRVVPELMTVNPQLLKHVADYQQQLTTLLTAKKQMVTVLLSQVVTATGALVVDQWGALPSQWQLAVFATWLEQQTQQLFTESKLQPLVSWGQRTRPATSRLTVNAAWELYRNAGIIEALPIKKRGKKLMPREKIMVDLNQWQKITATQTVGIFTRVPNVVSQPFWLTEADWPLVWRPWQAGDRIVLKGGGHQLVRRLLIDRKVPAERREQVQVLVNAQGNVLWVVGHKFSYRTTGTQTVFLALKHES.

28 to 33 (STGVDS) is an ATP binding site.

It belongs to the tRNA(Ile)-lysidine synthase family.

It is found in the cytoplasm. The catalysed reaction is cytidine(34) in tRNA(Ile2) + L-lysine + ATP = lysidine(34) in tRNA(Ile2) + AMP + diphosphate + H(+). Its function is as follows. Ligates lysine onto the cytidine present at position 34 of the AUA codon-specific tRNA(Ile) that contains the anticodon CAU, in an ATP-dependent manner. Cytidine is converted to lysidine, thus changing the amino acid specificity of the tRNA from methionine to isoleucine. In Lactiplantibacillus plantarum (strain ATCC BAA-793 / NCIMB 8826 / WCFS1) (Lactobacillus plantarum), this protein is tRNA(Ile)-lysidine synthase.